Here is a 190-residue protein sequence, read N- to C-terminus: ATP synthase subunit delta (190 aa).

Belongs to the ATPase delta chain family. F-type ATPases have 2 components, F(1) - the catalytic core - and F(0) - the membrane proton channel. F(1) has five subunits: alpha(3), beta(3), gamma(1), delta(1), epsilon(1). F(0) has three main subunits: a(1), b(2) and c(10-14). The alpha and beta chains form an alternating ring which encloses part of the gamma chain. F(1) is attached to F(0) by a central stalk formed by the gamma and epsilon chains, while a peripheral stalk is formed by the delta and b chains.

The protein localises to the cell inner membrane. F(1)F(0) ATP synthase produces ATP from ADP in the presence of a proton or sodium gradient. F-type ATPases consist of two structural domains, F(1) containing the extramembraneous catalytic core and F(0) containing the membrane proton channel, linked together by a central stalk and a peripheral stalk. During catalysis, ATP synthesis in the catalytic domain of F(1) is coupled via a rotary mechanism of the central stalk subunits to proton translocation. In terms of biological role, this protein is part of the stalk that links CF(0) to CF(1). It either transmits conformational changes from CF(0) to CF(1) or is implicated in proton conduction. The protein is ATP synthase subunit delta of Methylobacterium nodulans (strain LMG 21967 / CNCM I-2342 / ORS 2060).